Consider the following 221-residue polypeptide: AGPIASRQIVPNYPASSTSKGFHLVVNVTDPSADFTPSINNFYVNSIHVGAALNYVGVTAVPGRIFYQNGTAEEIRYAQSTVISDGATPPVPFGLSLRPDEGSDVVSTARLDAGPGTTGVRVSRFPEPYRFLQPETFLACNESLAYYQGDYFTVIKQADVTVGDDGSIDYNVPDNCISVRLIPECTELNELPEDAYASHEFAADTQCYDDVSALNWSEYGP.

N-linked (GlcNAc...) asparagine glycosylation is found at N27, N69, N141, and N215.

As to expression, expressed in the mycelium (at protein level).

It localises to the secreted. The protein localises to the spore. It is found in the spore wall. Its subcellular location is the cytoplasm. The sequence is that of Antigenic protein SchS34 from Stachybotrys chartarum (Toxic black mold).